We begin with the raw amino-acid sequence, 266 residues long: Killer cell lectin-like receptor 8 (266 aa).

Residues 1–44 are Cytoplasmic-facing; the sequence is MSEQEVTFPTMRFHKSSGLNSQVRLEGTQRSRKAGLRVCSVPWQ. The helical; Signal-anchor for type II membrane protein transmembrane segment at 45–66 threads the bilayer; it reads LIVIALGILCSLRLVIVAVFVT. Topologically, residues 67-266 are extracellular; the sequence is KFFQYSQHKQ…CGKKLDKFPD (200 aa). N-linked (GlcNAc...) asparagine glycans are attached at residues Asn87 and Asn104. One can recognise a C-type lectin domain in the interval 143–261; the sequence is GVKYWFCYGT…PYYCICGKKL (119 aa). 4 disulfide bridges follow: Cys149-Cys154, Cys167-Cys255, Cys171-Cys257, and Cys236-Cys249.

As to quaternary structure, homodimer; disulfide-linked. Interacts with the adapter protein TYROBP/DAP12; the interaction leads to natural killer cell activation.

It is found in the cell membrane. Its function is as follows. Receptor on natural killer (NK) cells for class I MHC. This is Killer cell lectin-like receptor 8 (Klra8) from Mus musculus (Mouse).